The chain runs to 528 residues: Peptide chain release factor 3 (528 aa).

Residues 10-278 (DRRRTFGIIS…AFVEQAPVPR (269 aa)) form the tr-type G domain. GTP-binding positions include 19-26 (SHPDAGKT), 87-91 (DTPGH), and 141-144 (NKLD).

This sequence belongs to the TRAFAC class translation factor GTPase superfamily. Classic translation factor GTPase family. PrfC subfamily.

The protein localises to the cytoplasm. Its function is as follows. Increases the formation of ribosomal termination complexes and stimulates activities of RF-1 and RF-2. It binds guanine nucleotides and has strong preference for UGA stop codons. It may interact directly with the ribosome. The stimulation of RF-1 and RF-2 is significantly reduced by GTP and GDP, but not by GMP. The chain is Peptide chain release factor 3 from Syntrophotalea carbinolica (strain DSM 2380 / NBRC 103641 / GraBd1) (Pelobacter carbinolicus).